The following is a 248-amino-acid chain: Adenosylcobinamide-GDP ribazoletransferase (248 aa).

The next 8 helical transmembrane spans lie at 24 to 44 (EVNL…IGAW), 47 to 67 (LVFT…AGLF), 70 to 90 (IIIT…GLFS), 106 to 126 (VGAN…ALFL), 134 to 154 (IGWL…LLFA), 165 to 185 (LGSI…LFVL), 186 to 206 (FILG…VILF), and 228 to 248 (AGGQ…WGLI).

Belongs to the CobS family. The cofactor is Mg(2+).

The protein localises to the cell membrane. The enzyme catalyses alpha-ribazole + adenosylcob(III)inamide-GDP = adenosylcob(III)alamin + GMP + H(+). The catalysed reaction is alpha-ribazole 5'-phosphate + adenosylcob(III)inamide-GDP = adenosylcob(III)alamin 5'-phosphate + GMP + H(+). It functions in the pathway cofactor biosynthesis; adenosylcobalamin biosynthesis; adenosylcobalamin from cob(II)yrinate a,c-diamide: step 7/7. Its function is as follows. Joins adenosylcobinamide-GDP and alpha-ribazole to generate adenosylcobalamin (Ado-cobalamin). Also synthesizes adenosylcobalamin 5'-phosphate from adenosylcobinamide-GDP and alpha-ribazole 5'-phosphate. This is Adenosylcobinamide-GDP ribazoletransferase from Listeria welshimeri serovar 6b (strain ATCC 35897 / DSM 20650 / CCUG 15529 / CIP 8149 / NCTC 11857 / SLCC 5334 / V8).